Consider the following 217-residue polypeptide: MATVEPETTPTPNPPPAEEEKTESNQEVANPEHYIKHPLQNRWALWFFKNDKSKTWQANLRLISKFDTVEDFWALYNHIQLSSNLMPGCDYSLFKDGIEPMWEDEKNKRGGRWLITLNKQQRRSDLDRFWLETLLCLIGESFDDYSDDVCGAVVNVRAKGDKIAIWTTECENRDAVTHIGRVYKERLGLPPKIVIGYQSHADTATKSGSTTKNRFVV.

A disordered region spans residues 1 to 27 (MATVEPETTPTPNPPPAEEEKTESNQE). Residue alanine 2 is modified to N-acetylalanine. At threonine 22 the chain carries Phosphothreonine. Positions 37 to 40 (HPLQ) are EIF4EBP1/2/3 binding. 56–57 (WQ) serves as a coordination point for mRNA. The segment at 73-77 (WALYN) is EIF4EBP1/2/3 binding. 102–103 (WE) lines the mRNA pocket. Residues 132 to 139 (ETLLCLIG) are EIF4EBP1/2/3 binding. MRNA-binding positions include 157–162 (RAKGDK) and 205–207 (TKS). Position 209 is a phosphoserine; by PKC and MKNK2 (serine 209).

Belongs to the eukaryotic initiation factor 4E family. In terms of assembly, eIF4F is a multi-subunit complex, the composition of which varies with external and internal environmental conditions. It is composed of at least EIF4A, EIF4E and EIF4G1/EIF4G3. EIF4E is also known to interact with other partners. Interacts with EIF4ENIF1/4E-T; promotes recruitment to P-bodies and import into the nucleus. Hypophosphorylated EIF4EBP1, EIF4EBP2 and EIF4EBP3 compete with EIF4G1/EIF4G3 to interact with EIF4E; insulin stimulated MAP-kinase (MAPK1 and MAPK3) phosphorylation of EIF4EBP1 causes dissociation of the complex allowing EIF4G1/EIF4G3 to bind and consequent initiation of translation. Interacts mutually exclusive with EIF4A1 or EIF4A2. Interacts with NGDN and PIWIL2. Component of the CYFIP1-EIF4E-FMR1 complex composed of CYFIP, EIF4E and FMR1. Interacts directly with CYFIP1. Interacts with CLOCK. Binds to MKNK2 in nucleus. Interacts with LIMD1, WTIP and AJUBA. Interacts with APOBEC3G in an RNA-dependent manner. Interacts with LARP1. Interacts with METTL3. Interacts with RBM24; this interaction prevents EIF4E from binding to p53/TP53 mRNA and inhibits the assembly of translation initiation complex. Interacts with DDX3X; interaction is direct and in an RNA-independent manner; this interaction enhances EIF4E cap-binding ability and is required for the repression of cap-dependent translation and the increase of IRES-mediated translation. DDX3X competes with EIF4G1 for interaction with EIF4E. Interacts with EIF4G1; which in a mutual exclusive interaction associates either with EIF1 or with EIF4E on a common binding site. Interacts with BTG4 and CNOT7. Interacts with LRPPRC (via N-terminus); the interaction promotes association of EIF4E with 4ESE-containing mRNAs. Interacts with mRNA cleavage enzyme CPSF3 and its cofactor CPSF1. Interacts (via RING-type zinc finger) with PML; the interaction results in conformational changes of both interacting proteins and reduces EIF4E affinity for the 5' m7G cap of mRNA, thus reducing EIF4E-mediated mRNA nuclear export. Interacts with homeobox protein HHEX/PRH; the interaction inhibits EIF4E-mediated mRNA nuclear export. Interacts with homeobox protein HOXA9; the interaction positively regulates EIF4E-mediated mRNA nuclear export. Interacts with homeobox protein EMX2. In terms of processing, phosphorylation increases the ability of the protein to bind to mRNA caps and to form the eIF4F complex. Phosphorylation also enhances its mRNA transport function. Phosphorylation at Ser-209 is not essential for protein synthesis.

The protein localises to the cytoplasm. It is found in the P-body. It localises to the stress granule. The protein resides in the nucleus. Its subcellular location is the nucleus speckle. The protein localises to the nuclear body. Functionally, acts in the cytoplasm to initiate and regulate protein synthesis and is required in the nucleus for export of a subset of mRNAs from the nucleus to the cytoplasm which promotes processes such as RNA capping, processing and splicing. Component of the protein complex eIF4F, which is involved in the recognition of the mRNA cap, ATP-dependent unwinding of 5'-terminal secondary structure and recruitment of mRNA to the ribosome. This protein recognizes and binds the 7-methylguanosine (m7G)-containing mRNA cap during an early step in the initiation of protein synthesis and facilitates ribosome binding by inducing the unwinding of the mRNAs secondary structures. Together with EIF4G1, antagonizes the scanning promoted by EIF1-EIF4G1 and is required for TISU translation, a process where the TISU element recognition makes scanning unnecessary. In addition to its role in translation initiation, also acts as a regulator of translation and stability in the cytoplasm. Component of the CYFIP1-EIF4E-FMR1 complex which binds to the mRNA cap and mediates translational repression: in the complex, EIF4E mediates the binding to the mRNA cap. Component of a multiprotein complex that sequesters and represses translation of proneurogenic factors during neurogenesis. In P-bodies, component of a complex that mediates the storage of translationally inactive mRNAs in the cytoplasm and prevents their degradation. May play an important role in spermatogenesis through translational regulation of stage-specific mRNAs during germ cell development. As well as its roles in translation, also involved in mRNA nucleocytoplasmic transport. Its role in mRNA export from the nucleus to the cytoplasm relies on its ability to bind the m7G cap of RNAs and on the presence of the 50-nucleotide EIF4E sensitivity element (4ESE) in the 3'UTR of sensitive transcripts. Interaction with the 4ESE is mediated by LRPPRC which binds simultaneously to both EIF4E and the 4ESE, thereby acting as a platform for assembly for the RNA export complex. EIF4E-dependent mRNA export is independent of ongoing protein or RNA synthesis and is also NFX1-independent but is XPO1-dependent with LRPPRC interacting with XPO1 to form an EIF4E-dependent mRNA export complex. Alters the composition of the cytoplasmic face of the nuclear pore to promote RNA export by reducing RANBP2 expression, relocalizing nucleoporin NUP214 and increasing expression of RANBP1 and RNA export factors DDX19 and GLE1. Promotes the nuclear export of cyclin CCND1 mRNA. Promotes the nuclear export of NOS2/iNOS mRNA. Promotes the nuclear export of MDM2 mRNA. Also promotes the export of additional mRNAs, including others involved in the cell cycle. In the nucleus, binds to capped splice factor-encoding mRNAs and stimulates their nuclear export to enhance splice factor production by increasing their cytoplasmic availability to the translation machinery. May also regulate splicing through interaction with the spliceosome in an RNA and m7G cap-dependent manner. Also binds to some pre-mRNAs and may play a role in their recruitment to the spliceosome. Promotes steady-state capping of a subset of coding and non-coding RNAs by mediating nuclear export of capping machinery mRNAs including RNMT, RNGTT and RAMAC to enhance their translation. Stimulates mRNA 3'-end processing by promoting the expression of several core cleavage complex factors required for mRNA cleavage and polyadenylation, and may also have a direct effect through its interaction with the CPSF3 cleavage enzyme. Rescues cells from apoptosis by promoting activation of serine/threonine-protein kinase AKT1 through mRNA export of NBS1 which potentiates AKT1 phosphorylation and also through mRNA export of AKT1 effectors, allowing for increased production of these proteins. The protein is Eukaryotic translation initiation factor 4E (EIF4E) of Oryctolagus cuniculus (Rabbit).